The primary structure comprises 512 residues: Cytochrome P450 monooxygenase paxQ (512 aa).

Helical transmembrane passes span 3–23 and 35–55; these read FVLS…LVSI and LQIP…ISAL. Cys453 lines the heme pocket.

Belongs to the cytochrome P450 family. Heme is required as a cofactor.

Its subcellular location is the membrane. Its pathway is secondary metabolite biosynthesis. Cytochrome P450 monooxygenase; part of the gene cluster that mediates the biosynthesis of paxilline, a mycotoxin that acts as an inhibitor of mammalian maxi-K channels. PaxG, the geranylgeranyl diphosphate (GGPP) synthase is proposed to catalyze the first step in paxilline biosynthesis. Condensation of indole-3-glycerol phosphate with GGPP by paxC then forms 3-geranylgeranylindole (3-GGI), followed by epoxidation and cyclization of this intermediate (by paxM and paxB) to form paspaline. Paspaline is subsequently converted to 13-desoxypaxilline by paxP, the latter being then converted to paxilline by paxQ. Finally paxilline can be mono- and di-prenylated by paxD. PaxQ can also utilized beta-paxitriol and alpha-PC-M6 as substrates converting them to alpha-paxitriol. This Penicillium paxilli protein is Cytochrome P450 monooxygenase paxQ.